The sequence spans 356 residues: Histidinol-phosphate aminotransferase (356 aa).

Lys-214 carries the N6-(pyridoxal phosphate)lysine modification.

This sequence belongs to the class-II pyridoxal-phosphate-dependent aminotransferase family. Histidinol-phosphate aminotransferase subfamily. In terms of assembly, homodimer. The cofactor is pyridoxal 5'-phosphate.

It catalyses the reaction L-histidinol phosphate + 2-oxoglutarate = 3-(imidazol-4-yl)-2-oxopropyl phosphate + L-glutamate. It functions in the pathway amino-acid biosynthesis; L-histidine biosynthesis; L-histidine from 5-phospho-alpha-D-ribose 1-diphosphate: step 7/9. The polypeptide is Histidinol-phosphate aminotransferase (hisC) (Escherichia coli O157:H7).